Here is a 361-residue protein sequence, read N- to C-terminus: Phospho-N-acetylmuramoyl-pentapeptide-transferase (361 aa).

The next 11 helical transmembrane spans lie at 10–30, 40–60, 84–104, 107–127, 147–167, 175–195, 206–226, 232–252, 260–280, 288–308, and 341–361; these read PGTGLQWSLGLIALILAACLI, LSLPLLLAGALSWLVCWIGVP, GTPTMGGLLLVPCGVVVGSLV, GDPRLLPIGLVTLAFMVIGGI, LLLQALAAGLFLLWAGLHGAI, WGWLLPIGLLIWPLGLFVFLA, LDGLAAGVGAIVLVGLSLQLM, GDPALAGYGAALAGAWLGFLL, VFMGDTGSLAMGAALSAIALL, LLMGGLLLAESLSVILQVWVF, and VVVSFWGISLLLVALGLVLVP.

The protein belongs to the glycosyltransferase 4 family. MraY subfamily. The cofactor is Mg(2+).

The protein resides in the cell inner membrane. The catalysed reaction is UDP-N-acetyl-alpha-D-muramoyl-L-alanyl-gamma-D-glutamyl-meso-2,6-diaminopimeloyl-D-alanyl-D-alanine + di-trans,octa-cis-undecaprenyl phosphate = di-trans,octa-cis-undecaprenyl diphospho-N-acetyl-alpha-D-muramoyl-L-alanyl-D-glutamyl-meso-2,6-diaminopimeloyl-D-alanyl-D-alanine + UMP. It participates in cell wall biogenesis; peptidoglycan biosynthesis. In terms of biological role, catalyzes the initial step of the lipid cycle reactions in the biosynthesis of the cell wall peptidoglycan: transfers peptidoglycan precursor phospho-MurNAc-pentapeptide from UDP-MurNAc-pentapeptide onto the lipid carrier undecaprenyl phosphate, yielding undecaprenyl-pyrophosphoryl-MurNAc-pentapeptide, known as lipid I. In Synechococcus sp. (strain RCC307), this protein is Phospho-N-acetylmuramoyl-pentapeptide-transferase.